The chain runs to 1371 residues: Probable serine/threonine-protein kinase DDB_G0293292 (1371 aa).

2 consecutive Protein kinase domains span residues 9–269 and 1131–1371; these read NKIL…HPNT and FKEV…QPTL. Residues 15-23 and lysine 39 contribute to the ATP site; that span reads IDDGNTKRK. Aspartate 143 acts as the Proton acceptor in catalysis.

It belongs to the protein kinase superfamily. Ser/Thr protein kinase family.

It catalyses the reaction L-seryl-[protein] + ATP = O-phospho-L-seryl-[protein] + ADP + H(+). The catalysed reaction is L-threonyl-[protein] + ATP = O-phospho-L-threonyl-[protein] + ADP + H(+). The sequence is that of Probable serine/threonine-protein kinase DDB_G0293292 from Dictyostelium discoideum (Social amoeba).